The primary structure comprises 242 residues: Transcription factor TCP17 (242 aa).

The region spanning 33–91 is the TCP domain; it reads GKDRHSKVCTVRGLRDRRIRLSVMTAIQVYDLQERLGLSQPSKVIDWLLEVAKNDVDLL.

In terms of assembly, interacts with SPL. In terms of tissue distribution, expressed in cotyledons, particularly in the vascular region, in leaves, roots, stems, buds, flowers and siliques.

The protein localises to the nucleus. Plays a pivotal role in the control of morphogenesis of shoot organs by negatively regulating the expression of boundary-specific genes such as CUC genes, probably through the induction of miRNA (e.g. miR164). Participates in ovule development. The sequence is that of Transcription factor TCP17 (TCP17) from Arabidopsis thaliana (Mouse-ear cress).